The following is a 169-amino-acid chain: Methanogen homoaconitase small subunit (169 aa).

A YLRT motif is present at residues 27–30 (YLRT).

It belongs to the LeuD family. LeuD type 2 subfamily. In terms of assembly, heterotetramer of 2 HacA and 2 HacB proteins.

The catalysed reaction is (2R)-homocitrate = (2R,3S)-homoisocitrate. It carries out the reaction (2R)-homocitrate = cis-homoaconitate + H2O. It catalyses the reaction (2R,3S)-homoisocitrate = cis-homoaconitate + H2O. The enzyme catalyses cis-(homo)2aconitate + H2O = (2R,3S)-iso(homo)2citrate. The catalysed reaction is cis-(homo)3aconitate + H2O = (2R,3S)-iso(homo)3citrate. It participates in organic acid metabolism; 2-oxosuberate biosynthesis. In terms of biological role, component of a hydro-lyase with broad substrate specificity for cis-unsaturated tricarboxylic acids. Catalyzes both the reversible dehydration of (R)-homocitrate ((R)-2-hydroxybutane-1,2,4-tricarboxylate) to produce cis-homoaconitate ((Z)-but-1-ene-1,2,4-tricarboxylate), and its hydration to homoisocitrate ((1R,2S)-1-hydroxybutane-1,2,4-tricarboxylate). Is also able to hydrate the analogous longer chain substrates cis-homo(2)-aconitate, cis-homo(3)-aconitate. These reactions are part of the biosynthesis pathway of coenzyme B. In Methanosarcina mazei (strain ATCC BAA-159 / DSM 3647 / Goe1 / Go1 / JCM 11833 / OCM 88) (Methanosarcina frisia), this protein is Methanogen homoaconitase small subunit (hacB).